A 418-amino-acid chain; its full sequence is Serine hydroxymethyltransferase (418 aa).

Residues Leu-120 and 124–126 (GHL) each bind (6S)-5,6,7,8-tetrahydrofolate. Residue Lys-229 is modified to N6-(pyridoxal phosphate)lysine.

Belongs to the SHMT family. Homodimer. Pyridoxal 5'-phosphate is required as a cofactor.

The protein localises to the cytoplasm. It carries out the reaction (6R)-5,10-methylene-5,6,7,8-tetrahydrofolate + glycine + H2O = (6S)-5,6,7,8-tetrahydrofolate + L-serine. It functions in the pathway one-carbon metabolism; tetrahydrofolate interconversion. It participates in amino-acid biosynthesis; glycine biosynthesis; glycine from L-serine: step 1/1. Catalyzes the reversible interconversion of serine and glycine with tetrahydrofolate (THF) serving as the one-carbon carrier. This reaction serves as the major source of one-carbon groups required for the biosynthesis of purines, thymidylate, methionine, and other important biomolecules. Also exhibits THF-independent aldolase activity toward beta-hydroxyamino acids, producing glycine and aldehydes, via a retro-aldol mechanism. The protein is Serine hydroxymethyltransferase of Myxococcus xanthus (strain DK1622).